We begin with the raw amino-acid sequence, 248 residues long: 2,3-dihydro-2,3-dihydroxybenzoate dehydrogenase (248 aa).

Trp9–Thr33 serves as a coordination point for NAD(+). Ser131 provides a ligand contact to substrate. Catalysis depends on Tyr144, which acts as the Proton acceptor.

It belongs to the short-chain dehydrogenases/reductases (SDR) family. In terms of assembly, homotetramer; dimer of dimers. EntA and EntE interact together.

The catalysed reaction is (2S,3S)-2,3-dihydroxy-2,3-dihydrobenzoate + NAD(+) = 2,3-dihydroxybenzoate + NADH + H(+). It participates in siderophore biosynthesis; enterobactin biosynthesis. Its activity is regulated as follows. Inhibited by cis-2-hydroxy-3-cyclohexen-1-carboxylate, cis-2-hydroxycyclohexane-1-carboxylate and trans-2-hydroxycyclohexane-1-carboxylate. Functionally, involved in the biosynthesis of the siderophore enterobactin (enterochelin), which is a macrocyclic trimeric lactone of N-(2,3-dihydroxybenzoyl)-serine. Catalyzes the reversible NAD-dependent oxidation of the C3-hydroxyl group of 2,3-dihydro-2,3-dihydroxybenzoate (2,3-diDHB), producing the transient intermediate 2-hydroxy-3-oxo-4,6-cyclohexadiene-1-carboxylate, which undergoes rapid aromatization to the final product, 2,3-dihydroxybenzoate (2,3-DHB). Only the compounds with a C3-hydroxyl group such as methyl 2,3-dihydro-2,3-dihydroxybenzoate, methyl-3-hydroxy-1,4-cyclohexadiene-1-carboxylate, trans-3-hydroxy-2-cyclohexene-1-carboxylate, cis-3-hydroxy-4-cyclohexene-1-carboxylate, cis-3-hydroxycyclohexane-1-carboxylic acid are oxidized to the corresponding ketone products. The stereospecificity of the C3 allylic alcohol group oxidation is 3R in a 1R,3R dihydro substrate. It can also increase the DHB-AMP ligase activity of EntE by interaction EntE. The polypeptide is 2,3-dihydro-2,3-dihydroxybenzoate dehydrogenase (Escherichia coli (strain K12)).